We begin with the raw amino-acid sequence, 668 residues long: DNA ligase (668 aa).

NAD(+) contacts are provided by residues 34–38 (DAEYD), 83–84 (SL), and Glu113. Lys115 acts as the N6-AMP-lysine intermediate in catalysis. NAD(+) is bound by residues Arg136, Glu170, Lys286, and Lys310. The Zn(2+) site is built by Cys404, Cys407, Cys422, and Cys427. The region spanning 590–668 (DSDSYFAGKT…EEQLMGELKK (79 aa)) is the BRCT domain.

Belongs to the NAD-dependent DNA ligase family. LigA subfamily. Mg(2+) serves as cofactor. It depends on Mn(2+) as a cofactor.

It catalyses the reaction NAD(+) + (deoxyribonucleotide)n-3'-hydroxyl + 5'-phospho-(deoxyribonucleotide)m = (deoxyribonucleotide)n+m + AMP + beta-nicotinamide D-nucleotide.. Functionally, DNA ligase that catalyzes the formation of phosphodiester linkages between 5'-phosphoryl and 3'-hydroxyl groups in double-stranded DNA using NAD as a coenzyme and as the energy source for the reaction. It is essential for DNA replication and repair of damaged DNA. This is DNA ligase from Bacillus subtilis (strain 168).